A 628-amino-acid polypeptide reads, in one-letter code: tRNA(Thr) (cytosine(32)-N(3))-methyltransferase (628 aa).

A compositionally biased stretch (basic and acidic residues) spans 1-18; that stretch reads MGVADLIKKFESISKEEG. Disordered regions lie at residues 1–106, 124–269, and 302–331; these read MGVA…GENA, AEVL…VNDL, and NIAHEGRGDNTGDQNAVEKSDFEKSDTEGS. A compositionally biased stretch (polar residues) spans 22 to 31; sequence VDTNSSSKPL. The span at 32 to 42 shows a compositional bias: basic and acidic residues; that stretch reads KSNDETKELHQ. Positions 53-62 are enriched in acidic residues; that stretch reads DVNEEFENEP. Phosphoserine is present on S93. Over residues 132–146 the composition is skewed to acidic residues; it reads EESDAIQEGVAEETE. A Phosphothreonine modification is found at T150. Over residues 173 to 186 the composition is skewed to acidic residues; sequence PAEEYSQSEEDADI. Residues 196–207 are compositionally biased toward polar residues; it reads NAENASQQANDG. Over residues 215-230 the composition is skewed to basic residues; sequence KNKKKKNKKKNKKKRN. Polar residues predominate over residues 231–240; the sequence is GNVNTNANVD. Phosphoserine occurs at positions 321 and 326. T347 bears the Phosphothreonine mark. S-adenosyl-L-methionine-binding residues include W399, Y403, G441, D466, D492, L493, and I515.

It belongs to the methyltransferase superfamily. METL family. As to quaternary structure, interacts with SES1.

It is found in the cytoplasm. It localises to the cytoskeleton. The catalysed reaction is cytidine(32) in tRNA(Thr) + S-adenosyl-L-methionine = N(3)-methylcytidine(32) in tRNA(Thr) + S-adenosyl-L-homocysteine + H(+). It carries out the reaction cytidine(32) in tRNA(Ser) + S-adenosyl-L-methionine = N(3)-methylcytidine(32) in tRNA(Ser) + S-adenosyl-L-homocysteine + H(+). Functionally, S-adenosyl-L-methionine-dependent methyltransferase that mediates N(3)-methylcytidine modification of residue 32 of the tRNA anticodon loop of tRNA(Thr) and tRNA(Ser). N(3)-methylcytidine methylation of tRNA(Thr) requires the N6-threonylcarbamoylation of tRNA (t6A37) by the EKC/KEOPS complex as prerequisite. N(3)-methylcytidine methylation of tRNA(Ser) requires the formation of N(6)-dimethylallyladenosine(37) (i6A37) by MOD5 as prerequisite. Methylation of tRNA(Ser) is also stimulated by SES1. Binds F-actin and shows weak F-actin cross-linking activity. The sequence is that of tRNA(Thr) (cytosine(32)-N(3))-methyltransferase (ABP140) from Saccharomyces cerevisiae (strain ATCC 204508 / S288c) (Baker's yeast).